A 128-amino-acid polypeptide reads, in one-letter code: Gastrotropin (128 aa).

N-acetylalanine is present on Ala2.

The protein belongs to the calycin superfamily. Fatty-acid binding protein (FABP) family. Predominantly expressed in ileum; also expressed in ovary.

The protein localises to the cytoplasm. Its subcellular location is the membrane. Its function is as follows. Binds to bile acids and is involved in enterohepatic bile acid metabolism. Required for efficient apical to basolateral transport of conjugated bile acids in ileal enterocytes. Stimulates gastric acid and pepsinogen secretion. This Rattus norvegicus (Rat) protein is Gastrotropin (Fabp6).